Reading from the N-terminus, the 960-residue chain is Isoleucine--tRNA ligase (960 aa).

The 'HIGH' region signature appears at 82–92 (PYANGHIHIGH). Residue Glu606 participates in L-isoleucyl-5'-AMP binding. The 'KMSKS' region signature appears at 647–651 (KMSKS). Lys650 provides a ligand contact to ATP. Zn(2+) contacts are provided by Cys931, Cys934, Cys951, and Cys954.

This sequence belongs to the class-I aminoacyl-tRNA synthetase family. IleS type 1 subfamily. As to quaternary structure, monomer. The cofactor is Zn(2+).

It localises to the cytoplasm. The enzyme catalyses tRNA(Ile) + L-isoleucine + ATP = L-isoleucyl-tRNA(Ile) + AMP + diphosphate. Functionally, catalyzes the attachment of isoleucine to tRNA(Ile). As IleRS can inadvertently accommodate and process structurally similar amino acids such as valine, to avoid such errors it has two additional distinct tRNA(Ile)-dependent editing activities. One activity is designated as 'pretransfer' editing and involves the hydrolysis of activated Val-AMP. The other activity is designated 'posttransfer' editing and involves deacylation of mischarged Val-tRNA(Ile). The protein is Isoleucine--tRNA ligase of Gluconobacter oxydans (strain 621H) (Gluconobacter suboxydans).